Here is a 257-residue protein sequence, read N- to C-terminus: Hydroxyacylglutathione hydrolase (257 aa).

Zn(2+)-binding residues include histidine 58, histidine 60, aspartate 62, histidine 63, histidine 116, aspartate 135, and histidine 173.

The protein belongs to the metallo-beta-lactamase superfamily. Glyoxalase II family. As to quaternary structure, monomer. Zn(2+) serves as cofactor.

It carries out the reaction an S-(2-hydroxyacyl)glutathione + H2O = a 2-hydroxy carboxylate + glutathione + H(+). It participates in secondary metabolite metabolism; methylglyoxal degradation; (R)-lactate from methylglyoxal: step 2/2. Thiolesterase that catalyzes the hydrolysis of S-D-lactoyl-glutathione to form glutathione and D-lactic acid. The sequence is that of Hydroxyacylglutathione hydrolase from Brucella melitensis biotype 1 (strain ATCC 23456 / CCUG 17765 / NCTC 10094 / 16M).